The primary structure comprises 236 residues: UPF0502 protein Bcep1808_3727 (236 aa).

This sequence belongs to the UPF0502 family.

This Burkholderia vietnamiensis (strain G4 / LMG 22486) (Burkholderia cepacia (strain R1808)) protein is UPF0502 protein Bcep1808_3727.